Consider the following 191-residue polypeptide: Guanylate kinase (191 aa).

In terms of domain architecture, Guanylate kinase-like spans 6 to 184 (GLIIILSSPS…TIQQIHTIIL (179 aa)). ATP is bound at residue 13-20 (SPSGAGKS).

It belongs to the guanylate kinase family.

It localises to the cytoplasm. The enzyme catalyses GMP + ATP = GDP + ADP. Functionally, essential for recycling GMP and indirectly, cGMP. The polypeptide is Guanylate kinase (Rickettsia bellii (strain RML369-C)).